A 565-amino-acid chain; its full sequence is Periplasmic trehalase (565 aa).

Residues 1–30 (MKSPAPSRPQKMALIPACIFLCFAALSVQA) form the signal peptide. Residues Arg152, 159-160 (WD), Asn196, 205-207 (RSQ), 277-279 (RPE), and Gly310 each bind substrate. Active-site proton donor/acceptor residues include Asp312 and Glu496. Glu511 is a substrate binding site. The interval 540 to 565 (DNVPATHPTVKSATTQPSTKEAQPTP) is disordered. The span at 548–565 (TVKSATTQPSTKEAQPTP) shows a compositional bias: polar residues.

It belongs to the glycosyl hydrolase 37 family. Monomer.

It is found in the periplasm. The enzyme catalyses alpha,alpha-trehalose + H2O = alpha-D-glucose + beta-D-glucose. Provides the cells with the ability to utilize trehalose at high osmolarity by splitting it into glucose molecules that can subsequently be taken up by the phosphotransferase-mediated uptake system. This is Periplasmic trehalase from Shigella flexneri.